Consider the following 434-residue polypeptide: D-amino acid dehydrogenase (434 aa).

3–17 (VIVLGSGVIGTTTAY) lines the FAD pocket.

This sequence belongs to the DadA oxidoreductase family. The cofactor is FAD.

The catalysed reaction is a D-alpha-amino acid + A + H2O = a 2-oxocarboxylate + AH2 + NH4(+). Oxidative deamination of D-amino acids. This Bordetella parapertussis (strain 12822 / ATCC BAA-587 / NCTC 13253) protein is D-amino acid dehydrogenase.